A 214-amino-acid polypeptide reads, in one-letter code: MRIVLLGAPGAGKGTQAQFLMAKFGIPQISTGDMLRAAIKAGSELGNKAKAVMDAGQLVSDDLIIGLVKERVAQEDCKAGFLLDGFPRTIPQADAMKESGIVVDHVLEFDVPDEVIVERMAGRRVHSGSGRVYHLVYNPPKVEGKDDVSGDDLSIRPDDEEATVRKRLAIYHEQTKPLVDFYQAEAKSGSCSYLTIDGTQAVEKVNQLLSAQLA.

10-15 provides a ligand contact to ATP; the sequence is GAGKGT. The segment at 30–59 is NMP; it reads STGDMLRAAIKAGSELGNKAKAVMDAGQLV. Residues Thr-31, Arg-36, 57 to 59, 85 to 88, and Gln-92 contribute to the AMP site; these read QLV and GFPR. An LID region spans residues 122 to 159; the sequence is GRRVHSGSGRVYHLVYNPPKVEGKDDVSGDDLSIRPDD. ATP-binding positions include Arg-123 and 132 to 133; that span reads VY. Arg-156 and Arg-167 together coordinate AMP. Residue Gln-200 coordinates ATP.

It belongs to the adenylate kinase family. In terms of assembly, monomer.

Its subcellular location is the cytoplasm. It carries out the reaction AMP + ATP = 2 ADP. The protein operates within purine metabolism; AMP biosynthesis via salvage pathway; AMP from ADP: step 1/1. Catalyzes the reversible transfer of the terminal phosphate group between ATP and AMP. Plays an important role in cellular energy homeostasis and in adenine nucleotide metabolism. This chain is Adenylate kinase, found in Colwellia psychrerythraea (strain 34H / ATCC BAA-681) (Vibrio psychroerythus).